Reading from the N-terminus, the 394-residue chain is Na(+)/H(+) antiporter NhaA (394 aa).

11 consecutive transmembrane segments (helical) span residues 11 to 31, 59 to 79, 95 to 115, 125 to 145, 155 to 175, 177 to 197, 203 to 220, 254 to 274, 296 to 316, 328 to 348, and 365 to 385; these read LEAASGILLLVSALLAMIFAN, LLMWVNDGFMAVFFILVGMEV, IFPAVAALGGMIIPALVYWFI, GWAIPMATDIAFALGIVALLS, FLLALAIIDDLGAIIVIALFF, HEMSMQALTIASIAIVILVAM, TGLINYAIIGTILWASVL, ALAPWCSFAILPLFAFSNAGV, LIIGKPVGVFLFSYVAVLLGI, IFAIAVLCGIGFTMSMFIAGL, and LGILMGTFVAAIIGYFLLKIT.

Belongs to the NhaA Na(+)/H(+) (TC 2.A.33) antiporter family.

It localises to the cell inner membrane. The enzyme catalyses Na(+)(in) + 2 H(+)(out) = Na(+)(out) + 2 H(+)(in). Na(+)/H(+) antiporter that extrudes sodium in exchange for external protons. The polypeptide is Na(+)/H(+) antiporter NhaA (Actinobacillus pleuropneumoniae serotype 3 (strain JL03)).